The chain runs to 203 residues: Small ribosomal subunit protein uS7B (203 aa).

It belongs to the universal ribosomal protein uS7 family. As to quaternary structure, component of the small ribosomal subunit (SSU). Mature yeast ribosomes consist of a small (40S) and a large (60S) subunit. The 40S small subunit contains 1 molecule of ribosomal RNA (18S rRNA) and at least 33 different proteins. The large 60S subunit contains 3 rRNA molecules (25S, 5.8S and 5S rRNA) and at least 46 different proteins.

The protein resides in the cytoplasm. Its function is as follows. Component of the ribosome, a large ribonucleoprotein complex responsible for the synthesis of proteins in the cell. The small ribosomal subunit (SSU) binds messenger RNAs (mRNAs) and translates the encoded message by selecting cognate aminoacyl-transfer RNA (tRNA) molecules. The large subunit (LSU) contains the ribosomal catalytic site termed the peptidyl transferase center (PTC), which catalyzes the formation of peptide bonds, thereby polymerizing the amino acids delivered by tRNAs into a polypeptide chain. The nascent polypeptides leave the ribosome through a tunnel in the LSU and interact with protein factors that function in enzymatic processing, targeting, and the membrane insertion of nascent chains at the exit of the ribosomal tunnel. In Schizosaccharomyces pombe (strain 972 / ATCC 24843) (Fission yeast), this protein is Small ribosomal subunit protein uS7B (rps502).